Reading from the N-terminus, the 101-residue chain is NAD(P)H-quinone oxidoreductase subunit 4L, chloroplastic (101 aa).

Transmembrane regions (helical) follow at residues 2 to 22 (MLEHVLVLSAYLFSIGIYGLI), 32 to 52 (MCLELILNAVNMNLVTFSDFF), and 61 to 81 (IFSIFVIAIAAAEAAIGPAIV).

Belongs to the complex I subunit 4L family. As to quaternary structure, NDH is composed of at least 16 different subunits, 5 of which are encoded in the nucleus.

Its subcellular location is the plastid. The protein localises to the chloroplast thylakoid membrane. The catalysed reaction is a plastoquinone + NADH + (n+1) H(+)(in) = a plastoquinol + NAD(+) + n H(+)(out). It carries out the reaction a plastoquinone + NADPH + (n+1) H(+)(in) = a plastoquinol + NADP(+) + n H(+)(out). Its function is as follows. NDH shuttles electrons from NAD(P)H:plastoquinone, via FMN and iron-sulfur (Fe-S) centers, to quinones in the photosynthetic chain and possibly in a chloroplast respiratory chain. The immediate electron acceptor for the enzyme in this species is believed to be plastoquinone. Couples the redox reaction to proton translocation, and thus conserves the redox energy in a proton gradient. The polypeptide is NAD(P)H-quinone oxidoreductase subunit 4L, chloroplastic (Lotus japonicus (Lotus corniculatus var. japonicus)).